A 104-amino-acid polypeptide reads, in one-letter code: Integration host factor subunit beta (104 aa).

It belongs to the bacterial histone-like protein family. In terms of assembly, heterodimer of an alpha and a beta chain.

In terms of biological role, this protein is one of the two subunits of integration host factor, a specific DNA-binding protein that functions in genetic recombination as well as in transcriptional and translational control. In Neisseria gonorrhoeae, this protein is Integration host factor subunit beta (ihfB).